The chain runs to 33 residues: Natriuretic peptide NP2 (33 aa).

An intrachain disulfide couples C10 to C26.

As to expression, expressed by the venom gland.

Its subcellular location is the secreted. Snake venom natriuretic peptide that shows an increase in perfusion pressure, urinary flow and glomerular filtration rate. Reduces total and proximal tubular transport of sodium. In the aortic ring assay, causes a relaxant effect in endothelium-intact thoracic aortic rings precontracted with phenylephrine in the presence and absence of isatin, a natriuretic receptor antagonist. The protein is Natriuretic peptide NP2 of Crotalus durissus cascavella (Northeastern Brazilian rattlesnake).